Reading from the N-terminus, the 871-residue chain is Espin (871 aa).

ANK repeat units follow at residues 1–31 (MALEQALQAARRGDLDVLRSLHAAGLLGPSL), 35–66 (LDALPVHHAARSGKLHCLRYLVEEVALPAVSR), 69–99 (NGATPAHDAAATGYLSCLQWLLTQGGCRVQE), 103–132 (SGATVLHLAARFGHPDVVKWLLYQGGANSA), 137–167 (TGALPIHYAAAKGDLPSLKLLVGHYPEGVNA), 171–201 (NGATPLYLACQEGHLEVTKYLVQECSADPHL), 205–235 (DGMTPLHAAAQMGHNPVLVWLVSFADVSFSE), 239–268 (DGATAMHFAASRGHTKVLSWLLLHGAEISQ), and 271–300 (WGGTPLHDAAENGELECCQILAVNGAGLDV). Serine 338 and serine 342 each carry phosphoserine. Disordered regions lie at residues 349-400 (QLDS…RGIP), 416-469 (PEKS…VGLH), 493-750 (KVEL…APGV), and 819-850 (EREQKRKEEERQKLEEIQRAKEQSEKLRTLGY). The span at 352 to 365 (SGMSSPNTTMSVQP) shows a compositional bias: polar residues. Residues 377-395 (FSNYDSCSSSHSSSKGQRS) show a composition bias toward low complexity. Residues 428-465 (PSPPPPPPPPPPSFPPPPPPTGTQPPPPPPGYPAPNPP) show a composition bias toward pro residues. Phosphoserine is present on residues serine 517, serine 524, and serine 556. Positions 522-548 (QDSELLHRQELLRHSTGLRRQDSDRKQ) are enriched in basic and acidic residues. Positions 606-629 (LPPPPPPPPLPEALSSPPPAPPLP) are enriched in pro residues. 2 stretches are compositionally biased toward polar residues: residues 659–670 (KSFNMMSPTGDN) and 685–707 (PTPQSKGLTTVFSGSGQPASQPE). Residue serine 665 is modified to Phosphoserine. The WH2 domain maps to 669 to 686 (DNSELLAEIKAGKSLKPT). 3 positions are modified to phosphoserine: serine 704, serine 708, and serine 714. The stretch at 772 to 848 (KRQVMVRKLQ…KEQSEKLRTL (77 aa)) forms a coiled coil.

Monomer. Binds F-actin in a Ca(2+)-resistant fashion. Interacts (via N-terminus) with BAIAP2 (via SH3-domain). Interacts with PFN2. Interacts with MYO3A (via C-terminus). Interacts with MYO3B (via C-terminus). As to expression, expressed at high concentration in the microvillar parallel actin bundle (PAB) of hair cells stereocilia in the cochlea and vestibular system. Detected also at high levels of a number of other sensory cell types, including taste receptor cells, solitary chemoreceptor cells, vomeronasal sensory neurons and Merkel cells. Isoforms 2, 3, 4 and 5 are expressed in Purkinje cells dendritic spines. Expressed in utricle hair bundles (at protein level).

It is found in the cytoplasm. The protein resides in the cytoskeleton. Its subcellular location is the cell projection. It localises to the stereocilium. The protein localises to the microvillus. It is found in the cell junction. The protein resides in the dendritic spine. Multifunctional actin-bundling protein. Plays a major role in regulating the organization, dimension, dynamics and signaling capacities of the actin filament-rich microvilli in the mechanosensory and chemosensory cells. Required for the assembly and stabilization of the stereociliary parallel actin bundles. Plays a crucial role in the formation and maintenance of inner ear hair cell stereocilia. Involved in the elongation of actin in stereocilia. In extrastriolar hair cells, required for targeting MYO3B to stereocilia tips, and for regulation of stereocilia diameter and staircase formation. The protein is Espin (Espn) of Mus musculus (Mouse).